The primary structure comprises 92 residues: Small ribosomal subunit protein uS17 (92 aa).

Belongs to the universal ribosomal protein uS17 family. In terms of assembly, part of the 30S ribosomal subunit.

Its function is as follows. One of the primary rRNA binding proteins, it binds specifically to the 5'-end of 16S ribosomal RNA. The polypeptide is Small ribosomal subunit protein uS17 (Mycoplasma mobile (strain ATCC 43663 / 163K / NCTC 11711) (Mesomycoplasma mobile)).